The primary structure comprises 452 residues: GTPase Der (452 aa).

EngA-type G domains are found at residues 4–169 (PIVA…PSPD) and 177–352 (INVS…EEHR). GTP-binding positions include 10–17 (GRPNVGKS), 57–61 (DTGGL), 120–123 (NKCE), 183–190 (GRPNVGKS), 230–234 (DTAGI), and 295–298 (NKWD). The region spanning 353 to 438 (RRVNTSVVNE…PIRLLWRGKK (86 aa)) is the KH-like domain.

Belongs to the TRAFAC class TrmE-Era-EngA-EngB-Septin-like GTPase superfamily. EngA (Der) GTPase family. In terms of assembly, associates with the 50S ribosomal subunit.

Its function is as follows. GTPase that plays an essential role in the late steps of ribosome biogenesis. The polypeptide is GTPase Der (Crocosphaera subtropica (strain ATCC 51142 / BH68) (Cyanothece sp. (strain ATCC 51142))).